Reading from the N-terminus, the 615-residue chain is Nuclear receptor subfamily 1 group D member 1 (615 aa).

Residues 1-12 are compositionally biased toward polar residues; sequence MTTLDSNNNTGG. The tract at residues 1–70 is required for phosphorylation by CSNK1E and cytoplasmic localization; it reads MTTLDSNNNT…TQDPARSFGS (70 aa). A disordered region spans residues 1–120; it reads MTTLDSNNNT…SSRVSPSKGT (120 aa). The segment at 1–129 is modulating; it reads MTTLDSNNNT…TSNITKLNGM (129 aa). Over residues 14-34 the composition is skewed to low complexity; sequence ITYIGSSGSSPSRTSPESLYS. The segment covering 35-48 has biased composition (polar residues); the sequence is DSSNGSFQSLTQGC. A crucial for activation of GJA1 region spans residues 49–285; the sequence is PTYFPPSPTG…PPRSPSPEPT (237 aa). Phosphoserine; by GSK3-beta is present on residues serine 55 and serine 59. Residues 70-94 are compositionally biased toward low complexity; the sequence is SAPPSLSDDSSPSSASSSSSSSSSS. A DNA-binding region (nuclear receptor) is located at residues 130–206; the sequence is VLLCKVCGDV…VGMSRDAVRF (77 aa). 2 NR C4-type zinc fingers span residues 133–153 and 170–194; these read CKVC…CEGC and CLKN…FKKC. Residues lysine 192 and lysine 193 each carry the N6-acetyllysine; by KAT5 modification. Disordered stretches follow at residues 235-286 and 312-337; these read LCPL…EPTM and PGNF…SQGC. The segment covering 240 to 252 has biased composition (low complexity); the sequence is TSPTPHPTSGSMG. Residues 253–262 show a composition bias toward pro residues; sequence PSPPPAPAPT. Threonine 275 carries the phosphothreonine; by CDK1 modification. The NR LBD domain occupies 285–615; sequence TMEDVISQVA…KLLSFRVDAQ (331 aa). A compositionally biased stretch (polar residues) spans 312–328; the sequence is PGNFNANHASGSPSATT. Cysteine 419 is a binding site for heme. Lysine 592 carries the N6-acetyllysine modification. Heme is bound at residue histidine 603.

Belongs to the nuclear hormone receptor family. NR1 subfamily. In terms of assembly, binds DNA as a monomer or a homodimer. Interacts with NR2E3 and ZNHIT1. Interacts with C1D. Interacts with SP1. Interacts with OPHN1 (via C-terminus). Interacts with PER2; the interaction associates PER2 to BMAL1 promoter region. Interacts with CRY1. Interacts with CCAR2. Interacts with SIAH2. Interacts with FBXW7 and CDK1. Interacts with HUWE1. Interacts with NR0B2. Interacts with NFIL3. Interacts (via domain NR LBD) with HSP90AA1 and HSP90AB1. In terms of processing, ubiquitinated, leading to its proteasomal degradation. Ubiquitinated by the SCF(FBXW7) complex when phosphorylated by CDK1 leading to its proteasomal degradation. Ubiquitinated by SIAH2; leading to its proteasomal degradation. Rapidly ubiquitinated in response to inflammatory triggers and sumoylation is a prerequisite to its ubiquitination. Post-translationally, sumoylated by UBE2I, desumoylated by SENP1, and sumoylation is a prerequisite to its ubiquitination. Phosphorylated by CSNK1E; phosphorylation enhances its cytoplasmic localization. In terms of processing, undergoes lysosome-mediated degradation in a time-dependent manner in the liver. As to expression, expressed during adipocyte differentiation (at protein level). Expressed in skeletal muscle, bladder, lumbar spinal cord, pancreatic islets and hypothalamus. Expressed in developing and adult retina. In the adult retina, predominantly expressed in the outer nuclear layer, where rod and cone cells reside, and also localized to the ganglion cell layer. Expressed in a circadian manner in the liver. Expressed in a circadian manner in the lung with a peak between ZT8 and ZT12.

The protein localises to the nucleus. It localises to the cytoplasm. The protein resides in the cell projection. Its subcellular location is the dendrite. It is found in the dendritic spine. Transcriptional repressor which coordinates circadian rhythm and metabolic pathways in a heme-dependent manner. Integral component of the complex transcription machinery that governs circadian rhythmicity and forms a critical negative limb of the circadian clock by directly repressing the expression of core clock components BMAL1, CLOCK and CRY1. Also regulates genes involved in metabolic functions, including lipid and bile acid metabolism, adipogenesis, gluconeogenesis and the macrophage inflammatory response. Acts as a receptor for heme which stimulates its interaction with the NCOR1/HDAC3 corepressor complex, enhancing transcriptional repression. Recognizes two classes of DNA response elements within the promoter of its target genes and can bind to DNA as either monomers or homodimers, depending on the nature of the response element. Binds as a monomer to a response element composed of the consensus half-site motif 5'-[A/G]GGTCA-3' preceded by an A/T-rich 5' sequence (RevRE), or as a homodimer to a direct repeat of the core motif spaced by two nucleotides (RevDR-2). Acts as a potent competitive repressor of ROR alpha (RORA) function and regulates the levels of its ligand heme by repressing the expression of PPARGC1A, a potent inducer of heme synthesis. Regulates lipid metabolism by repressing the expression of APOC3 and by influencing the activity of sterol response element binding proteins (SREBPs); represses INSIG2 which interferes with the proteolytic activation of SREBPs which in turn govern the rhythmic expression of enzymes with key functions in sterol and fatty acid synthesis. Regulates gluconeogenesis via repression of G6PC1 and PEPCK and adipocyte differentiation via repression of PPARG. Regulates glucagon release in pancreatic alpha-cells via the AMPK-NAMPT-SIRT1 pathway and the proliferation, glucose-induced insulin secretion and expression of key lipogenic genes in pancreatic-beta cells. Positively regulates bile acid synthesis by increasing hepatic expression of CYP7A1 via repression of NR0B2 and NFIL3 which are negative regulators of CYP7A1. Modulates skeletal muscle oxidative capacity by regulating mitochondrial biogenesis and autophagy; controls mitochondrial biogenesis and respiration by interfering with the STK11-PRKAA1/2-SIRT1-PPARGC1A signaling pathway. Represses the expression of SERPINE1/PAI1, an important modulator of cardiovascular disease and the expression of inflammatory cytokines and chemokines in macrophages. Represses gene expression at a distance in macrophages by inhibiting the transcription of enhancer-derived RNAs (eRNAs). Plays a role in the circadian regulation of body temperature and negatively regulates thermogenic transcriptional programs in brown adipose tissue (BAT); imposes a circadian oscillation in BAT activity, increasing body temperature when awake and depressing thermogenesis during sleep. In concert with NR2E3, regulates transcriptional networks critical for photoreceptor development and function. In addition to its activity as a repressor, can also act as a transcriptional activator. In the ovarian granulosa cells acts as a transcriptional activator of STAR which plays a role in steroid biosynthesis. In collaboration with SP1, activates GJA1 transcription in a heme-independent manner. Represses the transcription of CYP2B10, CYP4A10 and CYP4A14. Represses the transcription of CES2. Represses and regulates the circadian expression of TSHB in a NCOR1-dependent manner. Negatively regulates the protein stability of NR3C1 and influences the time-dependent subcellular distribution of NR3C1, thereby affecting its transcriptional regulatory activity. Plays a critical role in the circadian control of neutrophilic inflammation in the lung; under resting, non-stress conditions, acts as a rhythmic repressor to limit inflammatory activity whereas in the presence of inflammatory triggers undergoes ubiquitin-mediated degradation thereby relieving inhibition of the inflammatory response. Plays a key role in the circadian regulation of microglial activation and neuroinflammation; suppresses microglial activation through the NF-kappaB pathway in the central nervous system. Plays a role in the regulation of the diurnal rhythms of lipid and protein metabolism in the skeletal muscle via transcriptional repression of genes controlling lipid and amino acid metabolism in the muscle. The polypeptide is Nuclear receptor subfamily 1 group D member 1 (Nr1d1) (Mus musculus (Mouse)).